Reading from the N-terminus, the 231-residue chain is Albumin-2 (231 aa).

Hemopexin repeat units follow at residues 4–55 (TGYI…FKSL), 62–112 (SYGV…FPFF), 118–166 (ENGI…FPCF), and 172–223 (ESGT…WPSL). 4 residues coordinate Ca(2+): N8, D66, D122, and D176.

Monomer and homodimer.

It localises to the cytoplasm. The protein resides in the cytosol. Functionally, may play a role in response to oxidative stress and polyamine biosynthesis. In Pisum sativum (Garden pea), this protein is Albumin-2.